Here is a 212-residue protein sequence, read N- to C-terminus: ATP-dependent dethiobiotin synthetase BioD (212 aa).

Position 13–18 (13–18 (GIGKTV)) interacts with ATP. Residue T17 participates in Mg(2+) binding. Residue K33 is part of the active site. A substrate-binding site is contributed by S37. E100 serves as a coordination point for Mg(2+). ATP is bound by residues 100–103 (EGAG) and 184–186 (PLL).

Belongs to the dethiobiotin synthetase family. Homodimer. Mg(2+) is required as a cofactor.

Its subcellular location is the cytoplasm. It carries out the reaction (7R,8S)-7,8-diammoniononanoate + CO2 + ATP = (4R,5S)-dethiobiotin + ADP + phosphate + 3 H(+). It participates in cofactor biosynthesis; biotin biosynthesis; biotin from 7,8-diaminononanoate: step 1/2. In terms of biological role, catalyzes a mechanistically unusual reaction, the ATP-dependent insertion of CO2 between the N7 and N8 nitrogen atoms of 7,8-diaminopelargonic acid (DAPA, also called 7,8-diammoniononanoate) to form a ureido ring. This Brucella melitensis biotype 2 (strain ATCC 23457) protein is ATP-dependent dethiobiotin synthetase BioD.